Here is a 445-residue protein sequence, read N- to C-terminus: Trigger factor (445 aa).

Positions 172-257 (GDQVVINFVG…VKSVNWAHLP (86 aa)) constitute a PPIase FKBP-type domain.

This sequence belongs to the FKBP-type PPIase family. Tig subfamily.

The protein resides in the cytoplasm. It carries out the reaction [protein]-peptidylproline (omega=180) = [protein]-peptidylproline (omega=0). In terms of biological role, involved in protein export. Acts as a chaperone by maintaining the newly synthesized protein in an open conformation. Functions as a peptidyl-prolyl cis-trans isomerase. The sequence is that of Trigger factor from Polynucleobacter necessarius subsp. necessarius (strain STIR1).